The chain runs to 436 residues: Carboxypeptidase A5 (436 aa).

A signal peptide spans 1–33 (MQGTPGGGTRPGPSPVDRRTLLVFSFILAAALG). Positions 34–126 (QMNFTGDQVL…ERQAMAKSRR (93 aa)) are cleaved as a propeptide — activation peptide. A Peptidase M14 domain is found at 138 to 431 (SYHTLEEIYS…MALRTIMEHT (294 aa)). Residues H196 and E199 each contribute to the Zn(2+) site. Substrate-binding positions include 196–199 (HSRE), R254, and 271–272 (NR). A disulfide bridge links C265 with C288. H323 provides a ligand contact to Zn(2+). Residues 324–325 (SY) and Y375 each bind substrate. E397 functions as the Proton donor/acceptor in the catalytic mechanism.

Belongs to the peptidase M14 family. Requires Zn(2+) as cofactor. In terms of tissue distribution, expression is very low or not detectable.

It localises to the secreted. This Homo sapiens (Human) protein is Carboxypeptidase A5 (CPA5).